Reading from the N-terminus, the 374-residue chain is Translocating chain-associated membrane protein 1 (374 aa).

The Cytoplasmic segment spans residues 1-29 (MAIRKKSTKSPPVLSHEFVLQNHADIVSC). A helical membrane pass occupies residues 30–50 (VAMVFLLGLMFEITAKASIIF). Over 51–76 (VTLQYNVTLPATEEQATESVSLYYYG) the chain is Lumenal. Residue asparagine 56 is glycosylated (N-linked (GlcNAc...) asparagine). The helical transmembrane segment at 77 to 97 (IKDLATVFFYMLVAIIIHAVI) threads the bilayer. Residues 98–121 (QEYMLDKINRRMHFSKTKHSKFNE) are Cytoplasmic-facing. The TLC domain maps to 117-326 (SKFNESGQLS…NFQLRRWREH (210 aa)). Residues 122–142 (SGQLSAFYLFACVWGTFILIS) traverse the membrane as a helical segment. Residues 143 to 159 (ENYISDPTILWRAYPHN) are Lumenal-facing. Residues 160–180 (LMTFQMKFFYISQLAYWLHAF) form a helical membrane-spanning segment. The Cytoplasmic portion of the chain corresponds to 181–192 (PELYFQKTKKED). Residues 193-213 (IPRQLVYIGLYLFHIAGAYLL) form a helical membrane-spanning segment. The Lumenal portion of the chain corresponds to 214 to 217 (NLNH). Residues 218–238 (LGLVLLVLHYFVEFLFHISRL) form a helical membrane-spanning segment. Topologically, residues 239 to 251 (FYFSNEKYQKGFS) are cytoplasmic. The helical transmembrane segment at 252–272 (LWAVLFVLGRLLTLILSVLTV) threads the bilayer. Topologically, residues 273-297 (GFGLARAENQKLDFSTGNFNVLAVR) are lumenal. A helical membrane pass occupies residues 298–318 (IAVLASICVTQAFMMWKFINF). Topologically, residues 319 to 374 (QLRRWREHSAFQAPAVKKKPTVTKGRSSKKGTENGVNGTLTSNVADSPRNKKEKSS) are cytoplasmic. The span at 334–347 (VKKKPTVTKGRSSK) shows a compositional bias: basic residues. Residues 334–374 (VKKKPTVTKGRSSKKGTENGVNGTLTSNVADSPRNKKEKSS) are disordered. Residues 352–363 (NGVNGTLTSNVA) are compositionally biased toward polar residues. Serine 365 carries the phosphoserine modification.

It belongs to the TRAM family. As to quaternary structure, interacts with SEC61B. May interact with Derlin-1/DERL1. (Microbial infection) Interacts with human cytomegalovirus/HHV-5 proteins US2 and US11. Post-translationally, N-glycosylated.

Its subcellular location is the endoplasmic reticulum membrane. Functionally, involved in the translocation of nascent protein chains into or through the endoplasmic reticulum (ER) membrane by facilitating the proper chain positioning at the SEC61 channel. Regulates the exposure of nascent secretory protein chain to the cytosol during translocation into the ER. May affect the phospholipid bilayer in the vicinity of the lateral gate of the SEC61 channel, thereby facilitating ER protein transport. Intimately associates with transmembrane (TM) domain of nascent membrane proteins during the entire integration process into the ER membrane. Associates with the second TM domain of G-protein-coupled receptor opsin/OPSD nascent chain in the ER membrane, which may facilitate its integration into the membrane. Under conditions of ER stress, participates in the disposal of misfolded ER membrane proteins during the unfolded protein response (UPR), an integrated stress response (ISR) pathway, by selectively retrotranslocating misfolded ER-membrane proteins from the ER into the cytosol where they are ubiquitinated and degraded by the proteasome. In terms of biological role, (Microbial infection) In case of cytomegalovirus infection, participates in US2- and US11-mediated ER-to-cytosol retrotranslocation and subsequent degradation of major histocompatibility complex (MHC) class I heavy chains, thereby decreasing the immune detection by cytotoxic T-cells. In Homo sapiens (Human), this protein is Translocating chain-associated membrane protein 1.